We begin with the raw amino-acid sequence, 121 residues long: EAQLQQSGAELVRPGTSVKISCKAAGYTFTNYWIGWVKERPGHGLEWIGDIYPGGGFTNYNDNLKGKATLTADTSSSTAYIQLSSLTSEDSAIYHCARGIYYNSSPYFDSWGQGTTLTVSS.

Residues 1-112 form the Ig-like domain; that stretch reads EAQLQQSGAE…NSSPYFDSWG (112 aa).

This Mus musculus (Mouse) protein is Ig heavy chain V region MPC 11.